Here is a 374-residue protein sequence, read N- to C-terminus: Protein FAM199X (374 aa).

Positions 238–343 (YIREHSPRQR…QLKEQRQARK (106 aa)) are disordered. Over residues 261 to 295 (SNGSTSGVSAHSSSNASMVSSTSSSTASTGSNSST) the composition is skewed to low complexity. Basic residues predominate over residues 315–334 (DSKKRSKQRKMQQKALRKRQ). The stretch at 317-346 (KKRSKQRKMQQKALRKRQLKEQRQARKERL) forms a coiled coil.

It belongs to the FAM199 family.

The chain is Protein FAM199X (fam199x) from Danio rerio (Zebrafish).